The chain runs to 723 residues: Multiple organellar RNA editing factor 4, mitochondrial (723 aa).

The transit peptide at 1–64 directs the protein to the mitochondrion; that stretch reads MAMFSHRLRR…RLFSTTQYQY (64 aa). Disordered stretches follow at residues 180 to 303, 318 to 474, and 663 to 723; these read ITPG…GQTQ, RQEM…EGQP, and QNGG…NSRI. The segment covering 191–204 has biased composition (basic and acidic residues); that stretch reads EGFDSLKKESKPEQ. Polar residues-rich tracts occupy residues 219 to 233, 273 to 303, 327 to 365, and 373 to 430; these read TSGQVQGQGSLTLPD, GQWQSRGQGNSFQGSFKQSQGTLPVRKGQTQ, GQAQRSQMPSSQGTLRQGQAQGSQRPSNQVGYNQGQGAQ, and QGAQ…NYSP. Low complexity-rich tracts occupy residues 459 to 474 and 682 to 695; these read QGQGTPLPGQGQEGQP and QGFSGQGQNQTFQQ. The segment covering 714-723 has biased composition (basic and acidic residues); the sequence is TETRKPNSRI.

Belongs to the MORF family. In terms of assembly, heterodimers with MORF8/RIP1, MORF1/RIP8 and MORF3/RIP3.

It localises to the mitochondrion. Functionally, involved in organellar RNA editing. Required for the processing of few RNA editing site in mitochondria. The polypeptide is Multiple organellar RNA editing factor 4, mitochondrial (Arabidopsis thaliana (Mouse-ear cress)).